The following is a 2187-amino-acid chain: MATTEMNDVQPVQSQVLLFGDLSLAHVEESLKRLLHVKTNPLLAAFFQRVNHQLRRLLDGLPLEQQDFFPRFTTLIDLVSRLGETSGTPVLAFFLLSVQQVAQSIVYFSHGSRIFPPSSACIIGPCTGGFAAAALASSQNLVDLVNNGAEASILAFRTALVSFLISRSLSNSPQTEGSTSWSVAVSSRGEQTVEDLAQEYMAAKTPLRHSSLWKSAVTASLTITLSGQPSILQGFLETYSEQLRYKYLDIDSPYHAAHLFSETDVEQIVSHLAGSDTADQKPRLPVLSSATGQLISASTFHGLLHTVVQETLLKPVCWDLILDSCQSWLTQGGAQECTILPFSSNAGTMIASALTKEKEIEVTVADATGSGLLDEKPTGRFEHSKIAIVGYSGRFPSAASNDAFWELLRSGQDVHREVPRDRFEWEKYYDPTGKKKNTSRVKYGCWIDEPGVFDTRFFNMSPKEAENTDPAQRLAITTTYEAMEMAGMVRNRTASTQQDRIGVFFGTTSDDWREVNSGQDVGTYFIPGGNRAFVPGRISYFFRFSGPSLSIDTACSSSFAAIQAACSYLWRGECDAAIAGGTNVLTSPDNFAGLDRAHFLSTTGNCNAFDDEASGYCRSDAVGSVVLKRLEDAEADNDPIFGVILGTNTNHCGQTESITRPHEGDQISVFKNIIRHSGIDPTDVSYIEMHGTGTQAGDATEMNSVLSAFVPKYKRTEMSPQRPLFIGSAKANIGHAESASGVSSLIKVMEMMKHNEIPPHCGIKNRINHNYPLDLAQRGVNIAFEVKPWLRENSNGGKRRVFLNNFSAAGGNTAMLIEDAPLPKSIAHLTDPRSTHLVSVSAKSPKSLLANIKSILASLDMRATPPSVAALSYTTTARRTQHNYRVIVSGSDLDSVKSSLRSWTQENESTISDFKPIPSSAKKQARVAFAFTGQGTLYTAIGAQLFAVNETFKINIHKLNRLAEIQGFPSFIGLIDGTITAEELPNVSPVVTQLALVCVQVALYELWSSWGLNPAAVIGHSLGEYPALYAAGVLSSADMIYLVATRATLLEKLCTRGTHSMLAVKASEDVAEKLIRDATASPECEIACANQPAGHVIAGPVGKIDEVAQKAAESGVEVVKLNVPYAFHSPQVEPILVDFLESASQGVTYNAPTIPVLSPFHGRVVAAGETGVLNAEYLVAACRGQVNFKQALSSAGELTDADRTLWLEIGAHPACGGMVKGTIDSRVKTIASLRQNVDAYQTLTTGLKTLYLAGIDINWNEYHRHFPASHQMVKLPMYAWDLKNYWIQYKNDFLLYKGGDFPQQIAAAPTPVPVVRKYLSPCAQQIVEEFHDSQQSTMVVESDIFDPKLLPVLQGHLVNGAALCPSSMYADLAYTVADYLIRHCPTQIPDTTGLDVTNVKVSNPLIAKGNETTHLFRASVKADWPANRVSIDLFSVGANGKRTASHAKLDVVLYPGQQWLKEWKRNAHFITSRIKGLNAAIHSSSTETHLIKRGMAYKLFASLVDYKKEYQGMSEIVIDSHELEAVSTVQFQVGKEEFFLNPRWIDSLGGVAGFIMNANDGVCSKDQVFINHGWERMRIAEPFDEKKTYHAYNRMQLVENTTYAGDTYIMDGDRVIAIFEGVVFQGVPRRALDHLLPNAAAKSAAATKAPAKAPVAAVAPPRTPTKAAPQSRQAAPKQKRSPVSDVFNRILGLISEEVGVSLSDLVGDADFASLGVDSLLSLTITAKIRDEMGLDFPSSLFVDEPTVADLRTLLSNSDEDDTPSGDSSTYEDSESQITSPASSVGPETPGGGEFGSSESARVALVVRQAICEETQVAMEELKSFTCLSDIGVDSLLGLTLSSRLQDLLQVDIPGNMLMDFETVHDLEEEIYNVMGLEKPQKKASGPTQVPLAVPQPLAVPAVTSISSLPQATSILLSGSIKTAQTILFLFPDGSGSASSYAHVARAVAPSTFAVYGLNCPWRKTARDMTRLGITMSSMVAQYLPEVQRMIQKVRSEGNSTATIALGGWSAGGILAFEAIRQMGASTPISHLVLFDSPNPIGLQNPPQRMFDFFDGLGIFGPPPGKNGEKAKTPEWLLDHFNAFISILDDYEPSPLPNAPASLMIYAKDGVCKDPNGPQMDIRPDDPREMIWLLNNRTDFTADGWASIIGREKLSITVLDEVNHFSLMDPGPKMPEMGEAVAEFLGRN.

Residues 17-255 (LLFGDLSLAH…KYLDIDSPYH (239 aa)) are N-terminal acylcarrier protein transacylase domain (SAT). Residues 383–819 (HSKIAIVGYS…GGNTAMLIED (437 aa)) form the Ketosynthase family 3 (KS3) domain. Catalysis depends on for beta-ketoacyl synthase activity residues Cys555, His690, and His735. The interval 926–1226 (RVAFAFTGQG…GMVKGTIDSR (301 aa)) is malonyl-CoA:ACP transacylase (MAT) domain. Ser1021 (for acyl/malonyl transferase activity) is an active-site residue. The tract at residues 1321 to 1637 (PCAQQIVEEF…PRRALDHLLP (317 aa)) is product template (PT) domain. The interval 1324–1458 (QQIVEEFHDS…LDVVLYPGQQ (135 aa)) is N-terminal hotdog fold. Positions 1324–1633 (QQIVEEFHDS…FQGVPRRALD (310 aa)) constitute a PKS/mFAS DH domain. His1356 serves as the catalytic Proton acceptor; for dehydratase activity. The C-terminal hotdog fold stretch occupies residues 1486 to 1633 (TETHLIKRGM…FQGVPRRALD (148 aa)). Asp1546 acts as the Proton donor; for dehydratase activity in catalysis. The span at 1652–1669 (KAPVAAVAPPRTPTKAAP) shows a compositional bias: low complexity. Residues 1652–1681 (KAPVAAVAPPRTPTKAAPQSRQAAPKQKRS) form a disordered region. 2 Carrier domains span residues 1684-1758 (SDVF…SNSD) and 1796-1874 (SSES…YNVM). Residue Ser1718 is modified to O-(pantetheine 4'-phosphoryl)serine. Residues 1754–1796 (LSNSDEDDTPSGDSSTYEDSESQITSPASSVGPETPGGGEFGS) are disordered. Over residues 1757-1774 (SDEDDTPSGDSSTYEDSE) the composition is skewed to acidic residues. Position 1834 is an O-(pantetheine 4'-phosphoryl)serine (Ser1834). The tract at residues 1906 to 2183 (SSLPQATSIL…PEMGEAVAEF (278 aa)) is thioesterase (TE) domain. Ser2009 serves as the catalytic For thioesterase activity.

It catalyses the reaction 6 malonyl-CoA + acetyl-CoA + 5 H(+) = 3,6,7,9-tetrahydroxy-3-methyl-2,3-dihydro-1H-naphtho[2,1-b]pyran-1-one + 6 CO2 + 7 CoA + H2O. It participates in secondary metabolite biosynthesis. Functionally, non-reducing polyketide synthase; part of the gene cluster that mediates the biosynthesis of phenalenones such as herqueinone, compounds that have been reported to treat tumors, bacterial infections and/or mycoses, and rheumatic diseases. The non-reducing polyketide synthase phnA synthesizes the heptaketide backbone and cyclizes it into the angular, hemiketal-containing naphtho-gamma-pyrone prephenalenone. The product template (PT) domain of phnA catalyzes only the C4-C9 aldol condensation, which is unprecedented among known PT domains. The transformation of prephenalenone to phenalenones requires an FAD-dependent monooxygenase phnB, which catalyzes the C2 aromatic hydroxylation of prephenalenone and ring opening of the gamma-pyrone ring simultaneously. Subsequent intramolecular deprotonation of C3 phenolic oxygen accelerates phenalenone ring closure to yield the tricyclic phenalenone core with a C2 hydroxylation. The prenyltransferase phnF further catalyzes reverse C-prenylation of phenalenone by direct electrophilic substitution at C6, or possibly via first a forward O-prenylation of a neighboring phenol in phenalenone, followed by a Claisen rearrangement. The hydroalkoxylation enzyme phnH catalyzes the 5-exo-trig cyclization via acid catalysis after the spontaneous deprotonation of 7-OH, which leads to the formation of the dihydrobenzofuran atrovenetin. Atrovenetin is further converted to deoxyherqueinone by the O-methyltransferase phnC which can methylate C2-OH to stabilize the northern portion of the phenalenone core. Finally, the oxidoreductase phnG converts deoxyherqueinone to herqueinone via C6 hydroxylation. This chain is Non-reducing polyketide synthase phnA, found in Penicillium herquei.